A 90-amino-acid polypeptide reads, in one-letter code: Large ribosomal subunit protein bL27 (90 aa).

The interval 1 to 22 is disordered; that stretch reads MAHKKAGGSTRNGRDSNPKMLG.

The protein belongs to the bacterial ribosomal protein bL27 family.

The polypeptide is Large ribosomal subunit protein bL27 (Coxiella burnetii (strain Dugway 5J108-111)).